The chain runs to 466 residues: Soluble pyridine nucleotide transhydrogenase (466 aa).

36–45 serves as a coordination point for FAD; the sequence is ERYHNVGGGC.

This sequence belongs to the class-I pyridine nucleotide-disulfide oxidoreductase family. FAD is required as a cofactor.

It localises to the cytoplasm. The catalysed reaction is NAD(+) + NADPH = NADH + NADP(+). Functionally, conversion of NADPH, generated by peripheral catabolic pathways, to NADH, which can enter the respiratory chain for energy generation. The chain is Soluble pyridine nucleotide transhydrogenase from Salmonella gallinarum (strain 287/91 / NCTC 13346).